Here is a 197-residue protein sequence, read N- to C-terminus: Putative NADH dehydrogenase/NAD(P)H nitroreductase Lcho_1290 (197 aa).

Belongs to the nitroreductase family. HadB/RutE subfamily. Requires FMN as cofactor.

The polypeptide is Putative NADH dehydrogenase/NAD(P)H nitroreductase Lcho_1290 (Leptothrix cholodnii (strain ATCC 51168 / LMG 8142 / SP-6) (Leptothrix discophora (strain SP-6))).